Here is a 1506-residue protein sequence, read N- to C-terminus: Transient receptor potential cation channel subfamily M member 2 (1506 aa).

Basic and acidic residues predominate over residues 1–11 (MESLDRRRTGS). Positions 1 to 22 (MESLDRRRTGSEQEEGFGVQSR) are disordered. Topologically, residues 1-750 (MESLDRRRTG…WWGQLCVDNG (750 aa)) are cytoplasmic. Positions 173, 178, 301, 332, and 335 each coordinate ADP-D-ribose. Thr-738 is subject to Phosphothreonine. Residues 751 to 767 (LWRIILCMLAFPLLFTG) lie within the membrane without spanning it. Residues 768 to 792 (FISFREKRLQALCRPARVRAFFNAP) lie on the Cytoplasmic side of the membrane. A helical membrane pass occupies residues 793-813 (VVIFHMNILSYFAFLCLFAYV). Residues 814 to 824 (LMVDFQPSPSW) lie on the Extracellular side of the membrane. A helical transmembrane segment spans residues 825–845 (CEYLIYLWLFSLVCEETRQLF). Residues Glu-840 and Gln-843 each contribute to the Ca(2+) site. Residues 846 to 864 (YDPDGCGLMKMASLYFSDF) lie on the Cytoplasmic side of the membrane. The chain crosses the membrane as a helical span at residues 865 to 885 (WNKLDVGAILLFIVGLTCRLI). Position 866 (Asn-866) interacts with Ca(2+). Over 886-893 (PATLYPGR) the chain is Extracellular. The helical transmembrane segment at 894–914 (IILSLDFIMFCLRLMHIFTIS) threads the bilayer. Residues 915–926 (KTLGPKIIIVKR) lie on the Cytoplasmic side of the membrane. Residues 927 to 947 (MMKDVFFFLFLLAVWVVSFGV) traverse the membrane as a helical segment. Residues 948–967 (AKQAILIHNESRVDWIFRGV) lie on the Extracellular side of the membrane. The segment at residues 968–982 (VYHSYLTIFGQIPTY) is an intramembrane region (pore-forming). A Selectivity filter motif is present at residues 976–979 (FGQI). At 983-1019 (IDGVNFSMDQCSPNGTDPYKPKCPESDWTGQAPAFPE) the chain is on the extracellular side. Cys-993 and Cys-1005 are joined by a disulfide. A helical transmembrane segment spans residues 1020–1041 (WLTVTLLCLYLLFANILLLNLL). Over 1042–1076 (IAMFNYTFQEVQEHTDQIWKFQRHDLIEEYHGRPP) the chain is Cytoplasmic. Residue Glu-1070 coordinates Ca(2+). Residues 1077 to 1095 (APPPLILLSHLQLLIKRIV) lie within the membrane without spanning it. The Cytoplasmic portion of the chain corresponds to 1096-1506 (LKIPAKRHKQ…KVASLFGAHF (411 aa)). Positions 1350–1501 (RWKRNQGGAI…KTILQKVASL (152 aa)) constitute a Nudix hydrolase domain. Ser-1378 is an ADP-D-ribose binding site. The Nudix box motif lies at 1386–1407 (GSREPGEMLPRKLKRVLRQEFW). Positions 1427, 1429, 1488, and 1490 each coordinate ADP-D-ribose.

It belongs to the transient receptor (TC 1.A.4) family. LTrpC subfamily. TRPM2 sub-subfamily. As to quaternary structure, homotetramer. Post-translationally, protein kinase C (PKC)-mediated phosphorylation of TRPM2 at Thr-738 counteracts the effect of cytosolic Ca(2+) and elevates the temperature threshold. In terms of tissue distribution, detected in the preoptic area of the hypothalamus, a brain area involved in body temperature control. Detected in beta-cells in pancreas islets (at protein level). Detected in brain cortex, striatum, hippocampus CA1, CA2 and CA3 layers, and in the Purkinje cell layer in cerebellum. Widely expressed, with highest levels in lung, spleen, eye and brain. Detected in dendritic cells and in polymorphonuclear neutrophils.

The protein resides in the cell membrane. Its subcellular location is the perikaryon. It is found in the cell projection. It localises to the cytoplasmic vesicle. The protein localises to the lysosome. The enzyme catalyses Ca(2+)(in) = Ca(2+)(out). It carries out the reaction Na(+)(in) = Na(+)(out). Activated by intracellular ADP-ribose, beta-NAD (NAD(+)) and similar compounds, and by oxidative stress caused by reactive oxygen or nitrogen species. Ca(2+) and PI(4,5)P2 are required for channel opening by ADP-ribose. Activated by moderate heat (35 to 40 degrees Celsius). Activation by ADP-ribose and beta-NAD is strongly increased by moderate heat (35 to 40 degrees Celsius). Likewise, reactive oxygen species lower the threshold for activation by moderate heat (37 degrees Celsius). Inactivated by exposure to extracellular pH between 4.0 and 6.5; irreversibly inactivated when open channels are exposed to extracellular pH between 4.0 and 6.5, while pre-exposure of closed channels to extracellular pH 5.5 gives rise to currents that rapidly inactivate, but protects against irreversible inactivation. Inactivated by intracellular ATP. Activated by arachidonic acid. Inhibited by 2-aminoethyl diphenylborinate (2-APB). In terms of biological role, nonselective, voltage-independent cation channel that mediates Na(+) and Ca(2+) influx, leading to increased cytoplasmic Ca(2+) levels. Functions as a ligand-gated ion channel, gated by intracellular adenosine diphosphate ribose (ADP-ribose), Ca(2+), warm temperature, and oxidative stress. The precise physiological activators are under debate; the true, physiological activators may be ADP-ribose and ADP-ribose-2'-phosphate. Binding of ADP-ribose to the cytoplasmic Nudix domain causes a conformation change; the channel is primed but still requires Ca(2+) binding to trigger channel opening. Extracellular Ca(2+) passes through the channel and increases channel activity. Also contributes to Ca(2+) release from intracellular stores in response to ADP-ribose. Plays a role in numerous processes that involve signaling via intracellular Ca(2+) levels. Besides, mediates the release of lysosomal Zn(2+) stores in response to reactive oxygen species, leading to increased cytosolic Zn(2+) levels. Plays a role in mediating behavorial and physiological responses to moderate heat and thereby contributes to body temperature homeostasis. Plays a role in insulin secretion, a process that requires increased cytoplasmic Ca(2+) levels. Required for normal IFNG and cytokine secretion and normal innate immune immunity in response to bacterial infection. Required for normal phagocytosis and cytokine release by macrophages exposed to zymosan (in vitro). Plays a role in dendritic cell differentiation and maturation, and in dendritic cell chemotaxis via its role in regulating cytoplasmic Ca(2+) levels. Plays a role in the regulation of the reorganization of the actin cytoskeleton and filopodia formation in response to reactive oxygen species via its function in increasing cytoplasmic Ca(2+) and Zn(2+) levels. Confers susceptibility to cell death following oxidative stress. This Mus musculus (Mouse) protein is Transient receptor potential cation channel subfamily M member 2 (Trpm2).